The chain runs to 249 residues: Phosphomannomutase 2 (249 aa).

Aspartate 12 functions as the Nucleophile in the catalytic mechanism. Aspartate 12 and aspartate 14 together coordinate Mg(2+). Residue aspartate 14 is the Proton donor/acceptor of the active site. The alpha-D-mannose 1-phosphate site is built by arginine 21, arginine 123, arginine 134, arginine 141, serine 179, and aspartate 181. Aspartate 209 is a binding site for Mg(2+).

The protein belongs to the eukaryotic PMM family. As to quaternary structure, homodimer.

The protein resides in the cytoplasm. The catalysed reaction is alpha-D-mannose 1-phosphate = D-mannose 6-phosphate. It functions in the pathway nucleotide-sugar biosynthesis; GDP-alpha-D-mannose biosynthesis; alpha-D-mannose 1-phosphate from D-fructose 6-phosphate: step 2/2. Functionally, involved in the synthesis of the GDP-mannose and dolichol-phosphate-mannose required for a number of critical mannosyl transfer reactions. The chain is Phosphomannomutase 2 (pmmB) from Dictyostelium discoideum (Social amoeba).